The primary structure comprises 529 residues: Peptide chain release factor 3 (529 aa).

The tr-type G domain occupies 11–280 (SKRRTFAIIS…GLTDWAPAPL (270 aa)). GTP is bound by residues 20 to 27 (SHPDAGKT), 88 to 92 (DTPGH), and 142 to 145 (NKLD).

It belongs to the TRAFAC class translation factor GTPase superfamily. Classic translation factor GTPase family. PrfC subfamily.

Its subcellular location is the cytoplasm. Increases the formation of ribosomal termination complexes and stimulates activities of RF-1 and RF-2. It binds guanine nucleotides and has strong preference for UGA stop codons. It may interact directly with the ribosome. The stimulation of RF-1 and RF-2 is significantly reduced by GTP and GDP, but not by GMP. The polypeptide is Peptide chain release factor 3 (Vibrio vulnificus (strain CMCP6)).